The chain runs to 414 residues: Glutamyl-tRNA reductase (414 aa).

Residues 47–50 (TCNR), serine 106, 111–113 (EAQ), and glutamine 117 contribute to the substrate site. The Nucleophile role is filled by cysteine 48. Residue 185–190 (GAGRTG) coordinates NADP(+).

Belongs to the glutamyl-tRNA reductase family. As to quaternary structure, homodimer.

The enzyme catalyses (S)-4-amino-5-oxopentanoate + tRNA(Glu) + NADP(+) = L-glutamyl-tRNA(Glu) + NADPH + H(+). Its pathway is porphyrin-containing compound metabolism; protoporphyrin-IX biosynthesis; 5-aminolevulinate from L-glutamyl-tRNA(Glu): step 1/2. Catalyzes the NADPH-dependent reduction of glutamyl-tRNA(Glu) to glutamate 1-semialdehyde (GSA). This chain is Glutamyl-tRNA reductase, found in Herpetosiphon aurantiacus (strain ATCC 23779 / DSM 785 / 114-95).